We begin with the raw amino-acid sequence, 1075 residues long: mRNA-binding protein PUF2 (1075 aa).

The interval 38 to 68 (NTNARSVRVSDKRGRSSSTSPQKIGSYRTRA) is disordered. At serine 72 the chain carries Phosphoserine. A compositionally biased stretch (low complexity) spans 93 to 105 (TPVVVVPPTSSTP). The interval 93–112 (TPVVVVPPTSSTPDSLNSTT) is disordered. Serine 198 bears the Phosphoserine mark. In terms of domain architecture, RRM spans 316 to 402 (NTISISNVFP…APSTVSFARV (87 aa)). Positions 511-872 (ELNHLLQNAL…QLLEEVGLSS (362 aa)) constitute a PUM-HD domain. 6 Pumilio repeats span residues 574 to 611 (AIVMLDQLPELSSDYLGNTVIQKLFENSSNIIRDIMLR), 612 to 647 (KCNKYLTSMGVHKNGTWVCQKIIKMANTPRQINLVT), 649 to 683 (GVSDYCTPLFNDQFGNYVIQGILKFGFPWNSFIFE), 684 to 719 (SVLSHFWTIVQNRYGSRAVRACLEADSIITQCQLLT), 722 to 758 (SLIIVLSPYLATDTNGTLLITWLLDTCTLPNKNLILC), and 760 to 800 (KLVN…KIIH). Residues serine 872 and serine 876 each carry the phosphoserine modification. Disordered stretches follow at residues 874 to 931 (GISP…LNFN) and 997 to 1075 (NNYN…SYGY). Low complexity-rich tracts occupy residues 901–916 (VSVSSVRSSNSRHNSV), 997–1009 (NNYNNSGYSSQMN), and 1018–1063 (NNNN…NNNN).

It localises to the cytoplasm. In terms of biological role, RNA-binding protein involved in post-transcriptional regulation. Negatively regulates expression of COX17 by binding to the 3'-UTR of COX17 mRNA. Promotes decay of COX17 mRNA by enhancing its rate of deadenylation and subsequent turnover. Predominantly binds to mRNAs encoding membrane-associated proteins with roles in transmembrane transport and vesicular trafficking. The sequence is that of mRNA-binding protein PUF2 (PUF2) from Saccharomyces cerevisiae (strain ATCC 204508 / S288c) (Baker's yeast).